Here is a 557-residue protein sequence, read N- to C-terminus: Selenoprotein N (557 aa).

Residues 1-24 (MGQARPAARRPHSPDPGAQPAPPR) are disordered. An N-terminal signal peptide occupies residues 1 to 42 (MGQARPAARRPHSPDPGAQPAPPRRRARALALLGALLAAAAA). Positions 67-102 (VLGTDGLFLFSSLDTDQDMYISPEEFKPIAEKLTGS) constitute an EF-hand domain. Asn156 is a glycosylation site (N-linked (GlcNAc...) asparagine). A non-standard amino acid (selenocysteine) is located at residue Sec428. 2 N-linked (GlcNAc...) asparagine glycosylation sites follow: Asn449 and Asn497.

In terms of assembly, interacts with RYR1, RYR2 and RYR3. N-glycosylated.

Its subcellular location is the endoplasmic reticulum membrane. Functionally, plays an important role in cell protection against oxidative stress and in the regulation of redox-related calcium homeostasis. Regulates the calcium level of the ER by protecting the calcium pump ATP2A2 against the oxidoreductase ERO1A-mediated oxidative damage. Within the ER, ERO1A activity increases the concentration of H(2)O(2), which attacks the luminal thiols in ATP2A2 and thus leads to cysteinyl sulfenic acid formation (-SOH) and SEPN1 reduces the SOH back to free thiol (-SH), thus restoring ATP2A2 activity. Acts as a modulator of ryanodine receptor (RyR) activity: protects RyR from oxidation due to increased oxidative stress, or directly controls the RyR redox state, regulating the RyR-mediated calcium mobilization required for normal muscle development and differentiation. Essential for muscle regeneration and satellite cell maintenance in skeletal muscle. In Mus musculus (Mouse), this protein is Selenoprotein N.